A 32-amino-acid chain; its full sequence is Small ribosomal subunit protein uS19 (32 aa).

The protein belongs to the universal ribosomal protein uS19 family.

Protein S19 forms a complex with S13 that binds strongly to the 16S ribosomal RNA. The protein is Small ribosomal subunit protein uS19 (rpsS) of Yersinia enterocolitica.